The primary structure comprises 187 residues: Elongation factor P (187 aa).

This sequence belongs to the elongation factor P family.

The protein localises to the cytoplasm. It participates in protein biosynthesis; polypeptide chain elongation. Functionally, involved in peptide bond synthesis. Stimulates efficient translation and peptide-bond synthesis on native or reconstituted 70S ribosomes in vitro. Probably functions indirectly by altering the affinity of the ribosome for aminoacyl-tRNA, thus increasing their reactivity as acceptors for peptidyl transferase. The polypeptide is Elongation factor P (Chelativorans sp. (strain BNC1)).